The following is an 867-amino-acid chain: Ataxin-7 (867 aa).

A compositionally biased stretch (basic and acidic residues) spans 1-15 (MSERAADDVRGEPRR). Positions 1-59 (MSERAADDVRGEPRRAAGGAAAARQQQQQPQPLQPQRQHPPLRRPRAEDGGTGDTTTSA) are disordered. Low complexity predominate over residues 16 to 39 (AAGGAAAARQQQQQPQPLQPQRQH). Lys-222 bears the N6-acetyllysine mark. Lys-243 is covalently cross-linked (Glycyl lysine isopeptide (Lys-Gly) (interchain with G-Cter in SUMO); alternate). Lys-243 is covalently cross-linked (Glycyl lysine isopeptide (Lys-Gly) (interchain with G-Cter in SUMO2); alternate). The region spanning 320–387 (KRLSEREFDP…KAREKELIRH (68 aa)) is the SCA7 domain. Over residues 379 to 400 (AREKELIRHDSQQVPHPLRDPH) the composition is skewed to basic and acidic residues. Disordered regions lie at residues 379 to 483 (AREK…EESV), 600 to 711 (HGTT…SHSV), and 845 to 867 (TGNISGAQGLTNNSLLHQPKARP). Composition is skewed to pro residues over residues 426-437 (PQTPSLPRPPGC) and 447-462 (IDPPPGQESPHPPLPA). Positions 472–481 (EEGEGDDREE) are enriched in acidic residues. The span at 619-647 (SVQSRQVSASSSPPSTPSGLSSVPSSPLS) shows a compositional bias: low complexity. Residues 649–659 (KPQKWKPSKSI) show a composition bias toward basic residues. Polar residues predominate over residues 665–674 (SALSTNCHNA). The span at 689 to 711 (SSPLLVPSSSSSSSSSSSSSHSV) shows a compositional bias: low complexity. The span at 846-860 (GNISGAQGLTNNSLL) shows a compositional bias: polar residues.

This sequence belongs to the ataxin-7 family. As to quaternary structure, component of the SAGA transcription coactivator-HAT complex, at least composed of SUPT3H, GCN5L2, TAF5L, TAF6L, SUPT7L, TADA3L, TAD1L, TAF10, TAF12, TRRAP, TAF9 and ATXN7. The STAGA core complex is associated with a subcomplex required for histone deubiquitination composed of ATXN7L3, ENY2 and USP22. Interacts with SORBS1, PSMC1 and CRX. Interacts with TRRAP, GCN5L2 and TAF10. Interacts with alpha tubulin. Post-translationally, proteolytically cleaved by caspase-7 (CASP7). Sumoylation has no effect on subcellular location or interaction with components of the STAGA complex. Widely expressed in adult tissues, with the highest expression in heart, brain, liver and kidney.

Its subcellular location is the nucleus. The protein localises to the nucleolus. The protein resides in the nucleus matrix. It is found in the cytoplasm. It localises to the cytoskeleton. Acts as a component of the SAGA (aka STAGA) transcription coactivator-HAT complex. Mediates the interaction of SAGA complex with the CRX and is involved in CRX-dependent gene activation. Probably involved in tethering the deubiquitination module within the SAGA complex. Necessary for microtubule cytoskeleton stabilization. Involved in neurodegeneration. This is Ataxin-7 (Atxn7) from Mus musculus (Mouse).